A 335-amino-acid polypeptide reads, in one-letter code: Fructose-1,6-bisphosphatase class 1 (335 aa).

The Mg(2+) site is built by Glu91, Asp113, Leu115, and Asp116. Residues 116 to 119, Asn208, and Lys274 each bind substrate; that span reads DGSS. Glu280 lines the Mg(2+) pocket.

Belongs to the FBPase class 1 family. In terms of assembly, homotetramer. The cofactor is Mg(2+).

Its subcellular location is the cytoplasm. It catalyses the reaction beta-D-fructose 1,6-bisphosphate + H2O = beta-D-fructose 6-phosphate + phosphate. It functions in the pathway carbohydrate biosynthesis; gluconeogenesis. The polypeptide is Fructose-1,6-bisphosphatase class 1 (Chromobacterium violaceum (strain ATCC 12472 / DSM 30191 / JCM 1249 / CCUG 213 / NBRC 12614 / NCIMB 9131 / NCTC 9757 / MK)).